Consider the following 431-residue polypeptide: MGTVVIVGTQWGDEGKGKITDFLSQGAKVVSRYQGGDNAGHTIHANGEVYKLRLVPSGVLYPHQLSVIGNGVVVNPKSLVGELARLAEQGVTGENLRISDRAHVILPYHIKLDKLQEAAKGADKIGTTNRGIGPAYMDKAARVGIRMADLLDKEIFEERLKANLKAKNEEFVKVYDSTPMNFDDIFEEYYQYGQQLKQYVCDTSIVLNDAIDKSEHVLFEGAQGIMLDIDQGTYPFVTSSNPAGGVTVGAGVGASKIDRVVGVAKAYTSRVGDGPFPTELLDKTGDFIRNAGHEFGTVTGRPRRIGWFDAVVVRHSRRVAGITDLCLNSIDVLTGLDKVKICVAYERDGERVENYPASLKFLSECKPVYEELPGWQEDITKAKTLDDLPENARRYVERITELLGVDLLTFSVGPDRDQTNVLENVWDKVSR.

GTP is bound by residues 12 to 18 (GDEGKGK) and 40 to 42 (GHT). Residue Asp13 is the Proton acceptor of the active site. 2 residues coordinate Mg(2+): Asp13 and Gly40. IMP is bound by residues 13–16 (DEGK), 38–41 (NAGH), Thr128, Arg142, Gln223, Thr238, and Arg301. His41 functions as the Proton donor in the catalytic mechanism. 297–303 (TVTGRPR) contacts substrate. GTP is bound by residues Arg303, 329-331 (SID), and 411-413 (SVG).

Belongs to the adenylosuccinate synthetase family. In terms of assembly, homodimer. Mg(2+) is required as a cofactor.

Its subcellular location is the cytoplasm. The enzyme catalyses IMP + L-aspartate + GTP = N(6)-(1,2-dicarboxyethyl)-AMP + GDP + phosphate + 2 H(+). The protein operates within purine metabolism; AMP biosynthesis via de novo pathway; AMP from IMP: step 1/2. Functionally, plays an important role in the de novo pathway of purine nucleotide biosynthesis. Catalyzes the first committed step in the biosynthesis of AMP from IMP. This Lacticaseibacillus casei (strain BL23) (Lactobacillus casei) protein is Adenylosuccinate synthetase.